The sequence spans 156 residues: Protein US1 (156 aa).

Disordered regions lie at residues 90-114 and 133-156; these read RSRS…SDGD and ARRW…DSTS. A compositionally biased stretch (low complexity) spans 96 to 111; the sequence is AESGRSSSSSSVSVLS. Over residues 147-156 the composition is skewed to polar residues; sequence SQQAKNDSTS.

In Homo sapiens (Human), this protein is Protein US1 (US1).